The following is a 429-amino-acid chain: G2/mitotic-specific cyclin-B1 (429 aa).

The segment covering 1 to 14 (MALRVTRNTKLNTE) has biased composition (polar residues). Disordered stretches follow at residues 1-21 (MALR…KVSM) and 71-128 (TGKV…PMET). Position 73 is an N6-acetyllysine (Lys-73). The segment covering 92-106 (PEVELAEPEPEPEPV) has biased composition (acidic residues). Phosphoserine; by CDK1 is present on Ser-122. The residue at position 124 (Ser-124) is a Phosphoserine. Residue Ser-129 is modified to Phosphoserine; by PLK1. Ser-143 is modified (phosphoserine). Interaction with CDK2 regions lie at residues 165–173 (EYVKDIYAY) and 254–257 (YEEM). Thr-317 bears the Phosphothreonine mark.

It belongs to the cyclin family. Cyclin AB subfamily. In terms of assembly, interacts with the CDC2 protein kinase to form a serine/threonine kinase holoenzyme complex also known as maturation promoting factor (MPF). The cyclin subunit imparts substrate specificity to the complex. Binds HEI10. Interacts with catalytically active RALBP1 and CDC2 during mitosis to form an endocytotic complex during interphase. Interacts with CCNF; interaction is required for nuclear localization. Interacts with CDK5RAP3. Interacts with RFPL4A and UBE2A. Interacts with INCA1. In terms of processing, ubiquitinated by the SCF(NIPA) complex during interphase, leading to its destruction. Not ubiquitinated during G2/M phases. Phosphorylated by PLK1 at Ser-129 on centrosomes during prophase: phosphorylation by PLK1 does not cause nuclear import. Phosphorylation at Ser-143 was also reported to be mediated by PLK1 but Ser-129 seems to be the primary phosphorylation site.

Its subcellular location is the cytoplasm. It localises to the nucleus. The protein resides in the cytoskeleton. It is found in the microtubule organizing center. The protein localises to the centrosome. Its function is as follows. Essential for the control of the cell cycle at the G2/M (mitosis) transition. The protein is G2/mitotic-specific cyclin-B1 (CCNB1) of Cricetulus griseus (Chinese hamster).